The sequence spans 285 residues: NAD kinase (285 aa).

Asp66 acts as the Proton acceptor in catalysis. Residues 66 to 67, 137 to 138, Arg148, Arg165, Asp167, and 178 to 183 contribute to the NAD(+) site; these read DG, ND, and TAYSLS.

This sequence belongs to the NAD kinase family. A divalent metal cation serves as cofactor.

Its subcellular location is the cytoplasm. The catalysed reaction is NAD(+) + ATP = ADP + NADP(+) + H(+). Functionally, involved in the regulation of the intracellular balance of NAD and NADP, and is a key enzyme in the biosynthesis of NADP. Catalyzes specifically the phosphorylation on 2'-hydroxyl of the adenosine moiety of NAD to yield NADP. This is NAD kinase from Chlorobium phaeobacteroides (strain BS1).